Here is a 643-residue protein sequence, read N- to C-terminus: Protein cueball (643 aa).

The first 21 residues, 1 to 21, serve as a signal peptide directing secretion; sequence MMIWVPALIFLSACLLPRSNG. Over 22 to 530 the chain is Extracellular; that stretch reads TPLEWDFAVT…VCQTPFVWTS (509 aa). Residues N77 and N103 are each glycosylated (N-linked (GlcNAc...) asparagine). LDL-receptor class B repeat units follow at residues 116–163, 164–208, and 209–254; these read RNLF…DICR, RKLY…DQLS, and DRLF…TNDA. N172 carries an N-linked (GlcNAc...) asparagine glycan. Over residues 276–290 the composition is skewed to polar residues; it reads ATTTVRPEVESSTDG. Residues 276 to 303 are disordered; that stretch reads ATTTVRPEVESSTDGTESESKQESEPVE. N-linked (GlcNAc...) asparagine glycosylation occurs at N312. 3 consecutive EGF-like domains span residues 363–397, 398–429, and 432–470; these read RMDQLERDHCMNGGSYISKRDLCICPAGFKGSRCE, IRECHNYCVHGTCQMSDLAYPKCYCQPGFTGE, and EVSNCAGLCLNGGHCRLGETEKDQPSCECPANFAGERCE. Cystine bridges form between C372–C385, C387–C396, C401–C410, C405–C420, C436–C446, C440–C458, and C460–C469. Residues N472 and N507 are each glycosylated (N-linked (GlcNAc...) asparagine). A helical transmembrane segment spans residues 531 to 551; it reads SVIIILVVGIVFSLLLITTII. Residues 552–643 are Cytoplasmic-facing; sequence HGIRRLYKPK…LIHNMEDDLY (92 aa).

Belongs to the cueball family.

The protein resides in the cell membrane. Functionally, has a role in spermatogenesis and oogenesis. This is Protein cueball from Drosophila ananassae (Fruit fly).